A 179-amino-acid polypeptide reads, in one-letter code: Interferon lambda-4 (179 aa).

The N-terminal stretch at 1 to 21 (MRPSVWAAVAAGLWVLCTVIA) is a signal peptide. Residues 130–149 (SSRKVPGAQKRRHKPRRADS) form a disordered region.

It belongs to the lambda interferon family.

It is found in the cytoplasm. It localises to the secreted. In terms of biological role, cytokine that may trigger an antiviral response activating the JAK-STAT pathway and up-regulating specifically some interferon-stimulated genes. In Homo sapiens (Human), this protein is Interferon lambda-4 (IFNL4).